Consider the following 128-residue polypeptide: Small ribosomal subunit protein uS10 (128 aa).

It belongs to the universal ribosomal protein uS10 family.

The chain is Small ribosomal subunit protein uS10 (RPS20) from Oryza sativa subsp. japonica (Rice).